Consider the following 143-residue polypeptide: Large ribosomal subunit protein uL13 (143 aa).

The protein belongs to the universal ribosomal protein uL13 family. As to quaternary structure, part of the 50S ribosomal subunit.

Its function is as follows. This protein is one of the early assembly proteins of the 50S ribosomal subunit, although it is not seen to bind rRNA by itself. It is important during the early stages of 50S assembly. This is Large ribosomal subunit protein uL13 from Desulfitobacterium hafniense (strain DSM 10664 / DCB-2).